The following is a 316-amino-acid chain: Ribosomal RNA small subunit methyltransferase H (316 aa).

Residues 35 to 37, aspartate 55, phenylalanine 84, aspartate 105, and glutamine 112 each bind S-adenosyl-L-methionine; that span reads SGH.

It belongs to the methyltransferase superfamily. RsmH family.

The protein localises to the cytoplasm. It catalyses the reaction cytidine(1402) in 16S rRNA + S-adenosyl-L-methionine = N(4)-methylcytidine(1402) in 16S rRNA + S-adenosyl-L-homocysteine + H(+). Functionally, specifically methylates the N4 position of cytidine in position 1402 (C1402) of 16S rRNA. This is Ribosomal RNA small subunit methyltransferase H from Streptococcus equi subsp. equi (strain 4047).